We begin with the raw amino-acid sequence, 630 residues long: tRNA uridine 5-carboxymethylaminomethyl modification enzyme MnmG (630 aa).

13 to 18 (GGGHAG) contributes to the FAD binding site. Position 273 to 287 (273 to 287 (GPRYCPSIEDKIHRF)) interacts with NAD(+).

This sequence belongs to the MnmG family. As to quaternary structure, homodimer. Heterotetramer of two MnmE and two MnmG subunits. The cofactor is FAD.

The protein resides in the cytoplasm. Functionally, NAD-binding protein involved in the addition of a carboxymethylaminomethyl (cmnm) group at the wobble position (U34) of certain tRNAs, forming tRNA-cmnm(5)s(2)U34. The polypeptide is tRNA uridine 5-carboxymethylaminomethyl modification enzyme MnmG (Pseudomonas aeruginosa (strain LESB58)).